The chain runs to 144 residues: MAFNKEEKIKSLNRMQYEVTQNNGTEPPFQNEFWDHKEEGLYVDIVSGKPLFTSLDKFDSHCGWPSFTKPIEEEEVDEKLDTSHGMIRTEVRSKTADSHLGHVFNDGPGPSGLRYCINSAALRFIPKDKLKEEGYEACLHLFEK.

Positions 5 to 127 constitute a MsrB domain; that stretch reads KEEKIKSLNR…NSAALRFIPK (123 aa). Cysteine 116 serves as the catalytic Nucleophile.

It belongs to the MsrB Met sulfoxide reductase family.

It catalyses the reaction L-methionyl-[protein] + [thioredoxin]-disulfide + H2O = L-methionyl-(R)-S-oxide-[protein] + [thioredoxin]-dithiol. The protein is Peptide methionine sulfoxide reductase MsrB of Bacillus velezensis (strain DSM 23117 / BGSC 10A6 / LMG 26770 / FZB42) (Bacillus amyloliquefaciens subsp. plantarum).